The chain runs to 573 residues: Maestro heat-like repeat-containing protein family member 9 (573 aa).

5 HEAT repeats span residues leucine 118–threonine 155, proline 252–glutamate 289, threonine 292–lysine 328, serine 357–leucine 394, and glutamine 418–cysteine 458.

This chain is Maestro heat-like repeat-containing protein family member 9 (MROH9), found in Homo sapiens (Human).